A 121-amino-acid chain; its full sequence is MGNLIKELQDEQLRKEALTDFRVGDTIRVATKIVDGGKERTQVFQGTVMARRGGGAGETVALHRVAYGEGMEKSFLLHSPKIVGIEVVKRGKVSRARLYYLKGKTGKAAKVKEYIGPRAPK.

Belongs to the bacterial ribosomal protein bL19 family.

Its function is as follows. This protein is located at the 30S-50S ribosomal subunit interface and may play a role in the structure and function of the aminoacyl-tRNA binding site. This chain is Large ribosomal subunit protein bL19, found in Chlamydia caviae (strain ATCC VR-813 / DSM 19441 / 03DC25 / GPIC) (Chlamydophila caviae).